The sequence spans 807 residues: G-type lectin S-receptor-like serine/threonine-protein kinase At1g61420 (807 aa).

A signal peptide spans 1–24 (MGKKWIVFFAYLLLSSFFISSSSA). A Bulb-type lectin domain is found at 25 to 144 (GITKESPLPI…FSGRTLWQSF (120 aa)). Residues 25–426 (GITKESPLPI…ELGGNKRKKA (402 aa)) are Extracellular-facing. 6 N-linked (GlcNAc...) asparagine glycosylation sites follow: N53, N94, N117, N134, N236, and N267. In terms of domain architecture, EGF-like; atypical spans 278–314 (PEHSCDYYGVCGPFGLCVKSVPPKCTCFKGFVPKLIE). Cystine bridges form between C282–C294 and C288–C302. 3 N-linked (GlcNAc...) asparagine glycosylation sites follow: N320, N336, and N375. The region spanning 333–413 (CQGNSTGKYA…EGGELLSIRL (81 aa)) is the PAN domain. 2 disulfides stabilise this stretch: C368/C389 and C372/C378. Residues 427–447 (ITASIVSLSLVVIIAFVAFCF) traverse the membrane as a helical segment. Over 448-807 (WRYRVKHNAD…EMTKSVILGR (360 aa)) the chain is Cytoplasmic. Residues 494–779 (FSISNKLGQG…DLPPPEQPTF (286 aa)) form the Protein kinase domain. ATP-binding positions include 500–508 (LGQGGFGPV) and K522. Phosphoserine occurs at positions 528 and 543. The segment at 583–600 (RKRLEIDWPKRLDIIQGI) is caM-binding. Residue D619 is the Proton acceptor of the active site. Phosphoserine is present on residues S623 and S636. T653 bears the Phosphothreonine mark. Residues S696 and S790 each carry the phosphoserine modification.

This sequence belongs to the protein kinase superfamily. Ser/Thr protein kinase family.

Its subcellular location is the cell membrane. The catalysed reaction is L-seryl-[protein] + ATP = O-phospho-L-seryl-[protein] + ADP + H(+). The enzyme catalyses L-threonyl-[protein] + ATP = O-phospho-L-threonyl-[protein] + ADP + H(+). The sequence is that of G-type lectin S-receptor-like serine/threonine-protein kinase At1g61420 from Arabidopsis thaliana (Mouse-ear cress).